A 165-amino-acid chain; its full sequence is Nucleotide-binding protein A9601_05361 (165 aa).

This sequence belongs to the YajQ family.

Nucleotide-binding protein. The polypeptide is Nucleotide-binding protein A9601_05361 (Prochlorococcus marinus (strain AS9601)).